The following is a 945-amino-acid chain: Leucine--tRNA ligase 1 (945 aa).

The 'HIGH' region motif lies at 42–52; it reads PYTNSPLHIGH. The 'KMSKS' region signature appears at 625–629; sequence KMSKS. Lys-628 contacts ATP.

The protein belongs to the class-I aminoacyl-tRNA synthetase family.

The protein resides in the cytoplasm. It carries out the reaction tRNA(Leu) + L-leucine + ATP = L-leucyl-tRNA(Leu) + AMP + diphosphate. This is Leucine--tRNA ligase 1 from Sulfurisphaera tokodaii (strain DSM 16993 / JCM 10545 / NBRC 100140 / 7) (Sulfolobus tokodaii).